Consider the following 575-residue polypeptide: 4-substituted benzoates-glutamate ligase GH3.12 (575 aa).

Residues 6-33 (DINETFEKQLKDLTSNVKSIQDNLLEEI) adopt a coiled-coil conformation. An AMP-binding site is contributed by 95–96 (SS). A salicylate-binding site is contributed by 120-123 (YDLR). Positions 301, 324, 328, 347, 398, and 417 each coordinate AMP.

This sequence belongs to the IAA-amido conjugating enzyme family. In terms of assembly, interacts with the P.syringae pv. maculicola effector HopW1-1 (via C-terminus). In terms of tissue distribution, expressed in seedlings, mostly in cotyledons, leaves, hypocotyls and sporadically in roots. Not detected in unchallenged adult plants, except in flowers.

Its activity is regulated as follows. Specifically and reversibly inhibited by salicylic acid (SA). Catalyzes the conjugation of specific amino acids (e.g. Glu and possibly His, Lys, and Met) to their preferred acyl substrates (e.g. 4-substituted benzoates), in a magnesium ion- and ATP-dependent manner. Can use 4-substituted benzoates such as 4-aminobenzoate (pABA), 4-fluorobenzoate and 4-hydroxybenzoate (4-HBA), and, to a lesser extent, benzoate, vanillate and trans-cinnamate, but not 2-substituted benzoates and salicylic acid (SA), as conjugating acyl substrates. Involved in both basal and induced resistance in a SA-dependent manner. Confers resistance to virulent and avirulent pathogens (at least bacteria and oomycetes), and promotes SA glucosides accumulation. Required for the establishment of hyper-sensitive response (HR) upon incompatible interaction and subsequent systemic acquired resistance (SAR). The protein is 4-substituted benzoates-glutamate ligase GH3.12 (GH3.12) of Arabidopsis thaliana (Mouse-ear cress).